The chain runs to 529 residues: Bifunctional purine biosynthesis protein PurH (529 aa).

The region spanning 1–148 is the MGS-like domain; sequence MQQRRPVRRA…KNHKDVAIVV (148 aa).

The protein belongs to the PurH family.

It catalyses the reaction (6R)-10-formyltetrahydrofolate + 5-amino-1-(5-phospho-beta-D-ribosyl)imidazole-4-carboxamide = 5-formamido-1-(5-phospho-D-ribosyl)imidazole-4-carboxamide + (6S)-5,6,7,8-tetrahydrofolate. The enzyme catalyses IMP + H2O = 5-formamido-1-(5-phospho-D-ribosyl)imidazole-4-carboxamide. It functions in the pathway purine metabolism; IMP biosynthesis via de novo pathway; 5-formamido-1-(5-phospho-D-ribosyl)imidazole-4-carboxamide from 5-amino-1-(5-phospho-D-ribosyl)imidazole-4-carboxamide (10-formyl THF route): step 1/1. Its pathway is purine metabolism; IMP biosynthesis via de novo pathway; IMP from 5-formamido-1-(5-phospho-D-ribosyl)imidazole-4-carboxamide: step 1/1. This is Bifunctional purine biosynthesis protein PurH from Salmonella dublin (strain CT_02021853).